We begin with the raw amino-acid sequence, 315 residues long: Calumenin-A (315 aa).

Residues 1 to 19 form the signal peptide; the sequence is MEIRPLLMCFALCVVYATS. EF-hand domains follow at residues 68–103, 104–139, 151–186, 188–223, 229–264, and 265–300; these read ESKNRLGKIVEKIDADEDGFVTEAELKAWIKKAQKK, YIYDNVERQWKDFDLNNDRMISWEEYKNVTYGTYLD, QMMARDERRFKMADGNGDHIADKEEFTAFLHPEEYE, MKDIVVLETMEDIDKNGDGFIDLEEYIGDMYNHEDE, WVATEREQFSEFRDKNKDGKMDREETMDWILPADYD, and HAEAEAKHLVYESDTNKDGKLTKEEILNKYDLFVGS. Ca(2+)-binding residues include D81, D83, D85, E92, D117, N119, D121, M123, and E128. Residue N131 is glycosylated (N-linked (GlcNAc...) asparagine). Residues D164, N166, D168, E175, D201, N203, D205, E212, D242, N244, D246, K248, E253, D278, N280, D282, K284, and E289 each coordinate Ca(2+). A Prevents secretion from ER motif is present at residues 312 to 315; the sequence is HDEF.

This sequence belongs to the CREC family. As to quaternary structure, interacts with ggcx.

It is found in the endoplasmic reticulum membrane. Its subcellular location is the golgi apparatus. The protein resides in the secreted. The protein localises to the melanosome. It localises to the sarcoplasmic reticulum lumen. Its function is as follows. Involved in regulation of vitamin K-dependent carboxylation of multiple N-terminal glutamate residues. Seems to inhibit gamma-carboxylase ggcx. Binds 7 calcium ions with a low affinity. The polypeptide is Calumenin-A (calua) (Danio rerio (Zebrafish)).